An 86-amino-acid polypeptide reads, in one-letter code: MMLDLVKYPVIRTEKTTRLVENNQLSFDVDVRITKPQIRKIIEEFFNVKVLAVNTHRPPRKTNRLGSKPSYKRVIVTVDSDVTLLK.

The protein belongs to the universal ribosomal protein uL23 family. In terms of assembly, part of the 50S ribosomal subunit.

The protein localises to the plastid. Its subcellular location is the chloroplast. Functionally, binds to 23S rRNA. The polypeptide is Large ribosomal subunit protein uL23c (rpl23) (Chlorella vulgaris (Green alga)).